The following is a 339-amino-acid chain: Nicotinate-nucleotide--dimethylbenzimidazole phosphoribosyltransferase (339 aa).

Glu306 serves as the catalytic Proton acceptor.

Belongs to the CobT family.

It carries out the reaction 5,6-dimethylbenzimidazole + nicotinate beta-D-ribonucleotide = alpha-ribazole 5'-phosphate + nicotinate + H(+). It functions in the pathway nucleoside biosynthesis; alpha-ribazole biosynthesis; alpha-ribazole from 5,6-dimethylbenzimidazole: step 1/2. Functionally, catalyzes the synthesis of alpha-ribazole-5'-phosphate from nicotinate mononucleotide (NAMN) and 5,6-dimethylbenzimidazole (DMB). The protein is Nicotinate-nucleotide--dimethylbenzimidazole phosphoribosyltransferase of Brucella abortus (strain S19).